The chain runs to 450 residues: Phosphoglucosamine mutase (450 aa).

The active-site Phosphoserine intermediate is the S100. Mg(2+)-binding residues include S100, D240, D242, and D244. At S100 the chain carries Phosphoserine.

This sequence belongs to the phosphohexose mutase family. It depends on Mg(2+) as a cofactor. In terms of processing, activated by phosphorylation.

It carries out the reaction alpha-D-glucosamine 1-phosphate = D-glucosamine 6-phosphate. In terms of biological role, catalyzes the conversion of glucosamine-6-phosphate to glucosamine-1-phosphate. This Desulforudis audaxviator (strain MP104C) protein is Phosphoglucosamine mutase.